We begin with the raw amino-acid sequence, 84 residues long: NADH-ubiquinone oxidoreductase chain 4L (84 aa).

The next 2 membrane-spanning stretches (helical) occupy residues 19 to 39 and 50 to 70; these read ITLLIAIEILLLTVTLKLIHI and IFSLIIIILAGAESAIGLSIL.

This sequence belongs to the complex I subunit 4L family.

The protein resides in the mitochondrion membrane. It carries out the reaction a ubiquinone + NADH + 5 H(+)(in) = a ubiquinol + NAD(+) + 4 H(+)(out). Functionally, core subunit of the mitochondrial membrane respiratory chain NADH dehydrogenase (Complex I) that is believed to belong to the minimal assembly required for catalysis. Complex I functions in the transfer of electrons from NADH to the respiratory chain. The immediate electron acceptor for the enzyme is believed to be ubiquinone. This chain is NADH-ubiquinone oxidoreductase chain 4L (NAD4L), found in Candida albicans (strain SC5314 / ATCC MYA-2876) (Yeast).